The sequence spans 135 residues: Large ribosomal subunit protein uL16c (135 aa).

It belongs to the universal ribosomal protein uL16 family. As to quaternary structure, part of the 50S ribosomal subunit.

It localises to the plastid. Its subcellular location is the chloroplast. This is Large ribosomal subunit protein uL16c from Jasminum nudiflorum (Winter jasmine).